A 131-amino-acid polypeptide reads, in one-letter code: Leptin receptor overlapping transcript-like 1 (131 aa).

Helical transmembrane passes span 7–27 (LISLSFGGAIGLMFLMLGCAL), 32–52 (QYWPLFVLFFYILSPIPYCIA), 69–89 (LAIFLTTGIVVSAFGLPIVFA), and 100–120 (ALVLTGNTVIFATILGFFLVF).

The protein belongs to the OB-RGRP/VPS55 family.

It is found in the membrane. Its function is as follows. Negatively regulates growth hormone (GH) receptor cell surface expression in liver. May play a role in liver resistance to GH during periods of reduced nutrient availability. This Bos taurus (Bovine) protein is Leptin receptor overlapping transcript-like 1 (LEPROTL1).